The chain runs to 313 residues: CBK1 kinase activator protein MOB2 (313 aa).

Positions 1–109 (MSFLNTIRGL…KRSSIQTTKS (109 aa)) are disordered. Positions 23 to 69 (PSNNAIYSHSNLSGNGLRRTQSPTKFSPSKLSSKGAQGSAAYTSSPT) are enriched in polar residues. Phosphoserine; by CDC28 occurs at positions 44, 51, 67, and 97. Over residues 76-97 (QSLQHQDSQSSLQYQQQSGSVS) the composition is skewed to low complexity. Over residues 98–109 (PSKRSSIQTTKS) the composition is skewed to polar residues.

The protein belongs to the MOB1/phocein family. Interacts with protein kinase CBK1 to form the RAM CBK1-MOB2 kinase complex. In terms of processing, phosphorylated by CDC28 at Ser-44, Ser-51, Ser-67, and Ser-97. Phosphorylation occurs during bud emergence and is maintained until the G2/M transition. Dephosphorylated at the end of mitosis. Phosphorylation is required for the maintenance of polarisome components in hyphae.

It is found in the nucleus. Its subcellular location is the cytoplasm. In terms of biological role, functions as an activator subunit for the CBK1 protein kinase. Part of the regulation of ACE2 activity and cellular morphogenesis (RAM) signaling network. The RAM network is critically required for hyphal growth as well as normal vegetative growth, and for polarization of lipid rafts and the actin cytoskeleton. It play an essential role in biofilm formation. The RAM network also plays a role in serum- and antifungal azoles-induced activation of ergosterol biosynthesis genes, especially those involved in the late steps of ergosterol biosynthesis. This chain is CBK1 kinase activator protein MOB2 (MOB2), found in Candida albicans (strain SC5314 / ATCC MYA-2876) (Yeast).